Consider the following 241-residue polypeptide: MSSDELKRQAAAVALEQVRDGMKLGLGTGSTAKHFVELLGAKVQGGLQVVGVPTSEVTRADAERCGIPLATLDEVDHLDLTVDGADEIDPALNLVKGGGGALLREKIVAAASGRMIVIADDSKLVETLGRFPLPIEVIPFGLAATRRAIEQALAVCGIDGELKLRNGKDGHAFVTDGGHWIVDAHLGRIPDAPRLAGLLSVIPGIVEHGLFIGLASSVVLASPHGIRIIERPACRDSGESK.

Residues 28 to 31, 83 to 86, and 96 to 99 each bind substrate; these read TGST, DGAD, and KGGG. Glutamate 105 functions as the Proton acceptor in the catalytic mechanism. A substrate-binding site is contributed by lysine 123.

It belongs to the ribose 5-phosphate isomerase family. In terms of assembly, homodimer.

It catalyses the reaction aldehydo-D-ribose 5-phosphate = D-ribulose 5-phosphate. It participates in carbohydrate degradation; pentose phosphate pathway; D-ribose 5-phosphate from D-ribulose 5-phosphate (non-oxidative stage): step 1/1. Its function is as follows. Catalyzes the reversible conversion of ribose-5-phosphate to ribulose 5-phosphate. The chain is Ribose-5-phosphate isomerase A from Rhodopseudomonas palustris (strain BisA53).